We begin with the raw amino-acid sequence, 424 residues long: MSVKWEKQEGNEGVLTVEVDAETFNKALDDAFKKVVKQVSIPGFRKGKVPRGLFEQRFGVESLYQDALDILLPVEYPKAIDEAGIDPVDRPEIDVEKIEKGESLIFTAKVTVKPEVKLGDYKGLNVEKDDATVTDEDVQEELKGMQNRQAELVVKEEGAIENGDTVVLDFEGFVDGEAFEGGKAENYSLEVGSGSFIPGFEEQLVGLEAGAEKDVEVTFPEEYHAEDLAGKPAVFKVKIHEIKAKELPALDDEFAKDVDEEVETLAELTEKTKKRLEEAKENEAEGKLREELVEKASENAEVDIPQAMVDTELDRMMKEFEQRLQMQGMNLELYFQFSGQDEDALKEQMKEDAAKRVKSNLTLEAIAAAENLQVSDEEVEEELSKMAEAYNMPIENIKQAIGSTEAMKEDLKVRKAIDFLVENR.

The PPIase FKBP-type domain maps to 163–248; sequence GDTVVLDFEG…IHEIKAKELP (86 aa).

Belongs to the FKBP-type PPIase family. Tig subfamily.

The protein localises to the cytoplasm. The enzyme catalyses [protein]-peptidylproline (omega=180) = [protein]-peptidylproline (omega=0). In terms of biological role, involved in protein export. Acts as a chaperone by maintaining the newly synthesized protein in an open conformation. Functions as a peptidyl-prolyl cis-trans isomerase. The sequence is that of Trigger factor from Bacillus pumilus (strain SAFR-032).